A 185-amino-acid chain; its full sequence is Translocon-associated protein subunit gamma (185 aa).

Met-1 bears the N-acetylmethionine mark. Residues Met-1–Lys-27 are Lumenal-facing. At Ser-11 the chain carries Phosphoserine. Residues Ser-28–Trp-48 form a helical membrane-spanning segment. The Cytoplasmic portion of the chain corresponds to Arg-49–Asp-54. The chain crosses the membrane as a helical span at residues Leu-55–Ala-76. The Lumenal segment spans residues Tyr-77–Thr-135. At Ser-105 the chain carries Phosphoserine. Residues Phe-136–Leu-157 form a helical membrane-spanning segment. Residues Lys-158–Thr-163 lie on the Cytoplasmic side of the membrane. The helical transmembrane segment at Val-164–Ser-184 threads the bilayer.

The protein belongs to the TRAP-gamma family. In terms of assembly, heterotetramer of TRAP-alpha, TRAP-beta, TRAP-delta and TRAP-gamma.

Its subcellular location is the endoplasmic reticulum membrane. TRAP proteins are part of a complex whose function is to bind calcium to the ER membrane and thereby regulate the retention of ER resident proteins. This is Translocon-associated protein subunit gamma (SSR3) from Bos taurus (Bovine).